Consider the following 610-residue polypeptide: Dihydroxy-acid dehydratase (610 aa).

Asp-81 lines the Mg(2+) pocket. Residue Cys-122 coordinates [2Fe-2S] cluster. Residues Asp-123 and Lys-124 each contribute to the Mg(2+) site. Lys-124 carries the post-translational modification N6-carboxylysine. Cys-193 contacts [2Fe-2S] cluster. Glu-489 provides a ligand contact to Mg(2+). The active-site Proton acceptor is Ser-515.

This sequence belongs to the IlvD/Edd family. In terms of assembly, homodimer. [2Fe-2S] cluster serves as cofactor. The cofactor is Mg(2+).

It catalyses the reaction (2R)-2,3-dihydroxy-3-methylbutanoate = 3-methyl-2-oxobutanoate + H2O. The catalysed reaction is (2R,3R)-2,3-dihydroxy-3-methylpentanoate = (S)-3-methyl-2-oxopentanoate + H2O. The protein operates within amino-acid biosynthesis; L-isoleucine biosynthesis; L-isoleucine from 2-oxobutanoate: step 3/4. It participates in amino-acid biosynthesis; L-valine biosynthesis; L-valine from pyruvate: step 3/4. In terms of biological role, functions in the biosynthesis of branched-chain amino acids. Catalyzes the dehydration of (2R,3R)-2,3-dihydroxy-3-methylpentanoate (2,3-dihydroxy-3-methylvalerate) into 2-oxo-3-methylpentanoate (2-oxo-3-methylvalerate) and of (2R)-2,3-dihydroxy-3-methylbutanoate (2,3-dihydroxyisovalerate) into 2-oxo-3-methylbutanoate (2-oxoisovalerate), the penultimate precursor to L-isoleucine and L-valine, respectively. The chain is Dihydroxy-acid dehydratase from Xylella fastidiosa (strain M12).